Consider the following 366-residue polypeptide: Protein FAM110B (366 aa).

Disordered stretches follow at residues 127-152 (SSEGSSSGSGHKHSSRNWPPHRDTTD), 163-182 (KVYPTPGHGSPQESSSHVSR), and 216-252 (CSSSAPPLPPKPKVAAMKSPEADQVEPACGVSRRPSL). Phosphoserine occurs at positions 234 and 297. A disordered region spans residues 313 to 333 (DCEQSQDSNSDLRNDDSANDR). The span at 322-331 (SDLRNDDSAN) shows a compositional bias: basic and acidic residues.

It belongs to the FAM110 family.

It localises to the cytoplasm. The protein localises to the cytoskeleton. It is found in the microtubule organizing center. The protein resides in the centrosome. The chain is Protein FAM110B (Fam110b) from Mus musculus (Mouse).